We begin with the raw amino-acid sequence, 373 residues long: MKIGIPKEIKNNENRVGLSPSGVHALVEQGHTVLVEKDAGLGSFFEDKDYKDAGADIVSEQSSVWDVEMVIKVKEPLEEEYKYFKEGLILFTYLHLANEEKLTQALVDNKVVGIAYETVQLPDRSLPLLTPMSEVAGRMSAQVGSQFLQKFNGGMGILLGGVPGVPKGKVSIIGGGQAGTNAAKIALGLGANVTILDVNPKRLAELDDLFDGRVNTIMSNPLNIENAVKESDLVIGAVLIPGAKAPSLVTEDMIKQMKDGSVIVDIAIDQGGIFETTDKITTHDDPTYVKHGVVHYAVANMPGAVPRTSTIALNNATLPYAQLLASKGYREAFKANHALSLGLNTYKGHVTHKGVAEAFGLEYTSVEDALKED.

Substrate-binding residues include Arg-15 and Lys-74. Catalysis depends on His-95, which acts as the Proton donor/acceptor. NAD(+)-binding positions include Ser-133, 177-178 (QA), Asp-197, Ser-219, 238-239 (VL), 266-269 (IAID), and 298-301 (VANM). The active-site Proton donor/acceptor is the Asp-269.

It belongs to the AlaDH/PNT family. As to quaternary structure, homohexamer. Trimer of dimer.

It catalyses the reaction L-alanine + NAD(+) + H2O = pyruvate + NH4(+) + NADH + H(+). The protein operates within amino-acid degradation; L-alanine degradation via dehydrogenase pathway; NH(3) and pyruvate from L-alanine: step 1/1. Catalyzes the reversible reductive amination of pyruvate to L-alanine. May play a role in cell wall synthesis as L-alanine is an important constituent of the peptidoglycan layer. The protein is Alanine dehydrogenase (ald) of Staphylococcus haemolyticus (strain JCSC1435).